Consider the following 231-residue polypeptide: Flagellar L-ring protein (231 aa).

Positions 1–20 (MTYRRIPLYLSCLFLLALSG) are cleaved as a signal peptide. Cys-21 carries N-palmitoyl cysteine lipidation. Cys-21 is lipidated: S-diacylglycerol cysteine.

The protein belongs to the FlgH family. The basal body constitutes a major portion of the flagellar organelle and consists of four rings (L,P,S, and M) mounted on a central rod.

It is found in the cell outer membrane. Its subcellular location is the bacterial flagellum basal body. Functionally, assembles around the rod to form the L-ring and probably protects the motor/basal body from shearing forces during rotation. The polypeptide is Flagellar L-ring protein (Desulfotalea psychrophila (strain LSv54 / DSM 12343)).